We begin with the raw amino-acid sequence, 270 residues long: Phosphatidylglycerol--prolipoprotein diacylglyceryl transferase (270 aa).

The next 4 helical transmembrane spans lie at 19–39 (FPVYWYGIIIGTGVLLGLWLA), 56–76 (LVLIAVPIAILFARMYYVIFE), 92–112 (QGGLAIHGGLIGAVVTGILFA), and 116–136 (GVSFWKLADIAAPSILLGQAI). An a 1,2-diacyl-sn-glycero-3-phospho-(1'-sn-glycerol)-binding site is contributed by Arg138. A run of 3 helical transmembrane segments spans residues 178 to 198 (HPTFLYESLWNFAGVILLLAL), 206 to 226 (GELFFTYLIWYSIGRFFVEGL), and 236 to 256 (LRIAQVMSIGLVVISIIFIIV).

The protein belongs to the Lgt family.

The protein resides in the cell membrane. It carries out the reaction L-cysteinyl-[prolipoprotein] + a 1,2-diacyl-sn-glycero-3-phospho-(1'-sn-glycerol) = an S-1,2-diacyl-sn-glyceryl-L-cysteinyl-[prolipoprotein] + sn-glycerol 1-phosphate + H(+). It participates in protein modification; lipoprotein biosynthesis (diacylglyceryl transfer). Functionally, catalyzes the transfer of the diacylglyceryl group from phosphatidylglycerol to the sulfhydryl group of the N-terminal cysteine of a prolipoprotein, the first step in the formation of mature lipoproteins. This is Phosphatidylglycerol--prolipoprotein diacylglyceryl transferase from Bacillus anthracis (strain A0248).